The primary structure comprises 143 residues: Transcriptional regulator SlyA (143 aa).

Residues 2-135 (ESTLGSDLAR…LSGLIDKLEK (134 aa)) enclose the HTH marR-type domain. Residues 49–72 (QIQLAKAIGIEQPSLVRTLDQLEE) constitute a DNA-binding region (H-T-H motif).

It belongs to the SlyA family. In terms of assembly, homodimer.

Its function is as follows. Transcription regulator that can specifically activate or repress expression of target genes. The sequence is that of Transcriptional regulator SlyA from Yersinia pestis (strain Pestoides F).